The following is a 371-amino-acid chain: 3-isopropylmalate dehydrogenase (371 aa).

4 residues coordinate substrate: arginine 104, arginine 114, arginine 142, and aspartate 232. The Mg(2+) site is built by aspartate 232, aspartate 256, and aspartate 260. 290–302 is an NAD(+) binding site; that stretch reads GSAPDIAGQDKAN.

This sequence belongs to the isocitrate and isopropylmalate dehydrogenases family. LeuB type 1 subfamily. As to quaternary structure, homodimer. Mg(2+) serves as cofactor. Requires Mn(2+) as cofactor.

It is found in the cytoplasm. It carries out the reaction (2R,3S)-3-isopropylmalate + NAD(+) = 4-methyl-2-oxopentanoate + CO2 + NADH. Its pathway is amino-acid biosynthesis; L-leucine biosynthesis; L-leucine from 3-methyl-2-oxobutanoate: step 3/4. Functionally, catalyzes the oxidation of 3-carboxy-2-hydroxy-4-methylpentanoate (3-isopropylmalate) to 3-carboxy-4-methyl-2-oxopentanoate. The product decarboxylates to 4-methyl-2 oxopentanoate. This is 3-isopropylmalate dehydrogenase from Synechococcus sp. (strain JA-2-3B'a(2-13)) (Cyanobacteria bacterium Yellowstone B-Prime).